Consider the following 91-residue polypeptide: Ribonuclease P protein component 4 (91 aa).

The Zn(2+) site is built by C48, C51, C71, and C74.

The protein belongs to the eukaryotic/archaeal RNase P protein component 4 family. Consists of a catalytic RNA component and at least 4-5 protein subunits. The cofactor is Zn(2+).

It is found in the cytoplasm. The catalysed reaction is Endonucleolytic cleavage of RNA, removing 5'-extranucleotides from tRNA precursor.. Functionally, part of ribonuclease P, a protein complex that generates mature tRNA molecules by cleaving their 5'-ends. In Picrophilus torridus (strain ATCC 700027 / DSM 9790 / JCM 10055 / NBRC 100828 / KAW 2/3), this protein is Ribonuclease P protein component 4.